The primary structure comprises 550 residues: Hydroxylamine reductase (550 aa).

Cysteine 3, cysteine 6, cysteine 18, and cysteine 25 together coordinate [2Fe-2S] cluster. Hybrid [4Fe-2O-2S] cluster contacts are provided by histidine 249, glutamate 273, cysteine 317, cysteine 405, cysteine 433, cysteine 458, glutamate 492, and lysine 494. Cysteine 405 is subject to Cysteine persulfide.

This sequence belongs to the HCP family. [2Fe-2S] cluster serves as cofactor. Requires hybrid [4Fe-2O-2S] cluster as cofactor.

Its subcellular location is the cytoplasm. The catalysed reaction is A + NH4(+) + H2O = hydroxylamine + AH2 + H(+). Catalyzes the reduction of hydroxylamine to form NH(3) and H(2)O. The sequence is that of Hydroxylamine reductase from Salmonella typhimurium (strain LT2 / SGSC1412 / ATCC 700720).